A 369-amino-acid polypeptide reads, in one-letter code: Cobalt-precorrin-5B C(1)-methyltransferase (369 aa).

The protein belongs to the CbiD family.

It catalyses the reaction Co-precorrin-5B + S-adenosyl-L-methionine = Co-precorrin-6A + S-adenosyl-L-homocysteine. It functions in the pathway cofactor biosynthesis; adenosylcobalamin biosynthesis; cob(II)yrinate a,c-diamide from sirohydrochlorin (anaerobic route): step 6/10. Its function is as follows. Catalyzes the methylation of C-1 in cobalt-precorrin-5B to form cobalt-precorrin-6A. This Brucella melitensis biotype 1 (strain ATCC 23456 / CCUG 17765 / NCTC 10094 / 16M) protein is Cobalt-precorrin-5B C(1)-methyltransferase.